Consider the following 113-residue polypeptide: Nucleoid-associated protein RHA1_ro04210 (113 aa).

It belongs to the YbaB/EbfC family. Homodimer.

The protein localises to the cytoplasm. It localises to the nucleoid. Binds to DNA and alters its conformation. May be involved in regulation of gene expression, nucleoid organization and DNA protection. This Rhodococcus jostii (strain RHA1) protein is Nucleoid-associated protein RHA1_ro04210.